The following is a 404-amino-acid chain: MSLIKDSSIYLIGELSAKCVPFLLLPYLSRKLGVEGFGELSYYQTFLPLFVIFIGLSQDGAVARYFYVYGKRSLNLVVKTGYAYTLSIGGLGLLFCWLMQSEIMFYLVLSAIFQVFLSVQLSIRQCQKQAIPYTFIQVSSTITNAALTILMLEFYQTDLVEKRILAILISNVFVALLSYLIYRKRVNNKKFYFLQYKTAFFYIMSFGFLMIFHHGSFFIRQLDRIFIFHRFSEAELGLYAMGAQIAFILSVFILAINKALVPYLFEKLKQGSVKLKDLHRWSLLSLLIVPIPSLVTLIVPEQWLLFFLGKHFIGVKYYIIVFLLSTSLTIPYLFLVNYLFYHGKTKEISFCSVLSTMIYLGALGGLIFTDVVYIPYASVLGALGILPVLYKITKRVEENEYATH.

11 helical membrane-spanning segments follow: residues 9-29 (IYLI…PYLS), 36-56 (GFGE…FIGL), 76-96 (LVVK…LLFC), 103-123 (IMFY…QLSI), 135-155 (FIQV…LEFY), 162-182 (KRIL…YLIY), 199-219 (AFFY…SFFI), 236-256 (LGLY…ILAI), 288-308 (IVPI…LFFL), 319-339 (IIVF…VNYL), and 366-386 (LIFT…LGIL).

The protein belongs to the polysaccharide synthase family. HI_0867/HI_1700 subfamily.

It localises to the cell membrane. This is an uncharacterized protein from Haemophilus influenzae (strain ATCC 51907 / DSM 11121 / KW20 / Rd).